Here is a 101-residue protein sequence, read N- to C-terminus: Small ribosomal subunit protein eS24 (101 aa).

This sequence belongs to the eukaryotic ribosomal protein eS24 family.

The polypeptide is Small ribosomal subunit protein eS24 (Methanosarcina barkeri (strain Fusaro / DSM 804)).